Consider the following 433-residue polypeptide: uncharacterized protein (433 aa).

The Radical SAM core domain occupies 104 to 349 (ERGRNIIQVR…ELEYKKKGIE (246 aa)). [4Fe-4S] cluster-binding residues include Cys-118, Cys-122, and Cys-125. S-adenosyl-L-methionine contacts are provided by residues 171 to 172 (GE) and 236 to 238 (MLS). The 64-residue stretch at 370 to 433 (PFKVGEVTKV…KDNIIVAELV (64 aa)) folds into the TRAM domain.

The protein belongs to the radical SAM superfamily. It depends on [4Fe-4S] cluster as a cofactor.

This is an uncharacterized protein from Methanocaldococcus jannaschii (strain ATCC 43067 / DSM 2661 / JAL-1 / JCM 10045 / NBRC 100440) (Methanococcus jannaschii).